The sequence spans 343 residues: Methionine import ATP-binding protein MetN 1 (343 aa).

The region spanning 2–241 (IKLSNITKVF…PKTPLAQKFI (240 aa)) is the ABC transporter domain. Residue 38–45 (GASGAGKS) coordinates ATP.

The protein belongs to the ABC transporter superfamily. Methionine importer (TC 3.A.1.24) family. In terms of assembly, the complex is composed of two ATP-binding proteins (MetN), two transmembrane proteins (MetI) and a solute-binding protein (MetQ).

It localises to the cell inner membrane. It carries out the reaction L-methionine(out) + ATP + H2O = L-methionine(in) + ADP + phosphate + H(+). The catalysed reaction is D-methionine(out) + ATP + H2O = D-methionine(in) + ADP + phosphate + H(+). Functionally, part of the ABC transporter complex MetNIQ involved in methionine import. Responsible for energy coupling to the transport system. This chain is Methionine import ATP-binding protein MetN 1, found in Salmonella typhi.